The primary structure comprises 578 residues: Arginine--tRNA ligase (578 aa).

The short motif at 127-137 (PNLAKEMHVGH) is the 'HIGH' region element.

It belongs to the class-I aminoacyl-tRNA synthetase family. In terms of assembly, monomer.

It is found in the cytoplasm. It catalyses the reaction tRNA(Arg) + L-arginine + ATP = L-arginyl-tRNA(Arg) + AMP + diphosphate. This chain is Arginine--tRNA ligase, found in Pseudomonas savastanoi pv. phaseolicola (strain 1448A / Race 6) (Pseudomonas syringae pv. phaseolicola (strain 1448A / Race 6)).